The following is a 283-amino-acid chain: Pantothenate synthetase (283 aa).

34–41 (MGALHDGH) contacts ATP. The active-site Proton donor is histidine 41. Position 65 (glutamine 65) interacts with (R)-pantoate. Glutamine 65 lines the beta-alanine pocket. 152–155 (GEKD) serves as a coordination point for ATP. Residue glutamine 158 participates in (R)-pantoate binding. Residues valine 181 and 189-192 (MSSR) contribute to the ATP site.

This sequence belongs to the pantothenate synthetase family. In terms of assembly, homodimer.

It localises to the cytoplasm. It catalyses the reaction (R)-pantoate + beta-alanine + ATP = (R)-pantothenate + AMP + diphosphate + H(+). The protein operates within cofactor biosynthesis; (R)-pantothenate biosynthesis; (R)-pantothenate from (R)-pantoate and beta-alanine: step 1/1. Its function is as follows. Catalyzes the condensation of pantoate with beta-alanine in an ATP-dependent reaction via a pantoyl-adenylate intermediate. This Rhodopseudomonas palustris (strain BisB18) protein is Pantothenate synthetase.